A 473-amino-acid chain; its full sequence is ATP synthase subunit beta 2 (473 aa).

158 to 165 (GGAGVGKT) is a binding site for ATP.

The protein belongs to the ATPase alpha/beta chains family. F-type ATPases have 2 components, CF(1) - the catalytic core - and CF(0) - the membrane proton channel. CF(1) has five subunits: alpha(3), beta(3), gamma(1), delta(1), epsilon(1). CF(0) has three main subunits: a(1), b(2) and c(9-12). The alpha and beta chains form an alternating ring which encloses part of the gamma chain. CF(1) is attached to CF(0) by a central stalk formed by the gamma and epsilon chains, while a peripheral stalk is formed by the delta and b chains.

Its subcellular location is the cell membrane. It carries out the reaction ATP + H2O + 4 H(+)(in) = ADP + phosphate + 5 H(+)(out). Produces ATP from ADP in the presence of a proton gradient across the membrane. The catalytic sites are hosted primarily by the beta subunits. The protein is ATP synthase subunit beta 2 of Listeria monocytogenes serotype 4b (strain F2365).